The primary structure comprises 394 residues: Dual specificity protein phosphatase 4 (394 aa).

Val-2 carries the N-acetylvaline modification. The Rhodanese domain occupies 41–159; the sequence is SGGKCLLLDC…FSSEYPEFCS (119 aa). The Tyrosine-protein phosphatase domain maps to 195–336; that stretch reads GPVEILPFLY…LLQFESQVLA (142 aa). Cys-280 serves as the catalytic Phosphocysteine intermediate. Phosphoserine; by MAPK occurs at positions 386 and 391.

It belongs to the protein-tyrosine phosphatase family. Non-receptor class dual specificity subfamily. Hollow spherical complex composed of 24 subunits with pseudooctahedral symmetry, has a tetramer as the basic unit. Phosphorylation in the C-terminus by ERK1/2 inhibits proteasomal degradation and stabilizes the protein.

Its subcellular location is the nucleus. The catalysed reaction is O-phospho-L-tyrosyl-[protein] + H2O = L-tyrosyl-[protein] + phosphate. It catalyses the reaction O-phospho-L-seryl-[protein] + H2O = L-seryl-[protein] + phosphate. It carries out the reaction O-phospho-L-threonyl-[protein] + H2O = L-threonyl-[protein] + phosphate. Its function is as follows. Regulates mitogenic signal transduction by dephosphorylating both Thr and Tyr residues on MAP kinases ERK1 and ERK2. In Homo sapiens (Human), this protein is Dual specificity protein phosphatase 4 (DUSP4).